A 480-amino-acid chain; its full sequence is Glutamate--tRNA ligase (480 aa).

The short motif at 21–31 (PSPTGYLHVGG) is the 'HIGH' region element. Zn(2+) is bound by residues C110, C112, C137, and H139. The 'KMSKS' region motif lies at 248 to 252 (KLSKR). K251 contributes to the ATP binding site.

It belongs to the class-I aminoacyl-tRNA synthetase family. Glutamate--tRNA ligase type 1 subfamily. Monomer. Zn(2+) is required as a cofactor.

It is found in the cytoplasm. It carries out the reaction tRNA(Glu) + L-glutamate + ATP = L-glutamyl-tRNA(Glu) + AMP + diphosphate. Catalyzes the attachment of glutamate to tRNA(Glu) in a two-step reaction: glutamate is first activated by ATP to form Glu-AMP and then transferred to the acceptor end of tRNA(Glu). The polypeptide is Glutamate--tRNA ligase (Haemophilus influenzae (strain 86-028NP)).